The sequence spans 214 residues: Glucose-6-phosphate isomerase (214 aa).

Fe cation-binding residues include H92, H94, E101, and H140.

The protein belongs to the archaeal-type GPI family. In terms of assembly, homodimer.

It localises to the cytoplasm. It catalyses the reaction alpha-D-glucose 6-phosphate = beta-D-fructose 6-phosphate. It participates in carbohydrate degradation; glycolysis; D-glyceraldehyde 3-phosphate and glycerone phosphate from D-glucose: step 2/4. The chain is Glucose-6-phosphate isomerase from Sinorhizobium medicae (strain WSM419) (Ensifer medicae).